Reading from the N-terminus, the 62-residue chain is Photosystem II reaction center protein Z (62 aa).

Helical transmembrane passes span 8 to 28 (FLIA…VAYA) and 41 to 61 (YVGS…NFLV).

The protein belongs to the PsbZ family. PSII is composed of 1 copy each of membrane proteins PsbA, PsbB, PsbC, PsbD, PsbE, PsbF, PsbH, PsbI, PsbJ, PsbK, PsbL, PsbM, PsbT, PsbX, PsbY, PsbZ, Psb30/Ycf12, peripheral proteins PsbO, CyanoQ (PsbQ), PsbU, PsbV and a large number of cofactors. It forms dimeric complexes.

The protein localises to the cellular thylakoid membrane. Its function is as follows. May control the interaction of photosystem II (PSII) cores with the light-harvesting antenna, regulates electron flow through the 2 photosystem reaction centers. PSII is a light-driven water plastoquinone oxidoreductase, using light energy to abstract electrons from H(2)O, generating a proton gradient subsequently used for ATP formation. In Microcystis aeruginosa (strain NIES-843 / IAM M-2473), this protein is Photosystem II reaction center protein Z.